Consider the following 165-residue polypeptide: Probable velvet family sexual development regulator CC1G_12219 (165 aa).

The 121-residue stretch at 1-121 (MSNTDAQTSF…SVWGAQVNVR (121 aa)) folds into the Velvet domain.

It belongs to the velvet family.

It localises to the nucleus. Its function is as follows. Velvet-domain-containing protein that probably acts as a positive regulator of sexual development. In Coprinopsis cinerea (strain Okayama-7 / 130 / ATCC MYA-4618 / FGSC 9003) (Inky cap fungus), this protein is Probable velvet family sexual development regulator CC1G_12219.